Reading from the N-terminus, the 356-residue chain is Uroporphyrinogen decarboxylase (356 aa).

Substrate-binding positions include 27–31, aspartate 77, tyrosine 154, threonine 209, and histidine 327; that span reads RQAGR.

It belongs to the uroporphyrinogen decarboxylase family. As to quaternary structure, homodimer.

It localises to the cytoplasm. It carries out the reaction uroporphyrinogen III + 4 H(+) = coproporphyrinogen III + 4 CO2. Its pathway is porphyrin-containing compound metabolism; protoporphyrin-IX biosynthesis; coproporphyrinogen-III from 5-aminolevulinate: step 4/4. Functionally, catalyzes the decarboxylation of four acetate groups of uroporphyrinogen-III to yield coproporphyrinogen-III. The chain is Uroporphyrinogen decarboxylase from Hahella chejuensis (strain KCTC 2396).